A 357-amino-acid chain; its full sequence is DNA replication and repair protein RecF (357 aa).

Gly31–Thr38 is an ATP binding site.

This sequence belongs to the RecF family.

It is found in the cytoplasm. Functionally, the RecF protein is involved in DNA metabolism; it is required for DNA replication and normal SOS inducibility. RecF binds preferentially to single-stranded, linear DNA. It also seems to bind ATP. This Coxiella burnetii (strain CbuK_Q154) (Coxiella burnetii (strain Q154)) protein is DNA replication and repair protein RecF.